The sequence spans 524 residues: Phenylalanine--tRNA ligase alpha subunit (524 aa).

L-phenylalanine is bound by residues T362, Y441, and F467.

It belongs to the class-II aminoacyl-tRNA synthetase family. Phe-tRNA synthetase alpha subunit type 2 subfamily. Tetramer of two alpha and two beta subunits. Mg(2+) is required as a cofactor.

It is found in the cytoplasm. The enzyme catalyses tRNA(Phe) + L-phenylalanine + ATP = L-phenylalanyl-tRNA(Phe) + AMP + diphosphate + H(+). This chain is Phenylalanine--tRNA ligase alpha subunit, found in Methanopyrus kandleri (strain AV19 / DSM 6324 / JCM 9639 / NBRC 100938).